The sequence spans 214 residues: Adenylate kinase (214 aa).

G10 to T15 provides a ligand contact to ATP. Positions S30–V59 are NMP. Residues T31, R36, Q57 to V59, G85 to R88, and Q92 contribute to the AMP site. The tract at residues G122 to D159 is LID. Residues R123 and V132–Y133 each bind ATP. AMP-binding residues include R156 and R167. Q200 contacts ATP.

Belongs to the adenylate kinase family. Monomer.

It localises to the cytoplasm. The enzyme catalyses AMP + ATP = 2 ADP. Its pathway is purine metabolism; AMP biosynthesis via salvage pathway; AMP from ADP: step 1/1. Its function is as follows. Catalyzes the reversible transfer of the terminal phosphate group between ATP and AMP. Plays an important role in cellular energy homeostasis and in adenine nucleotide metabolism. The chain is Adenylate kinase from Shewanella loihica (strain ATCC BAA-1088 / PV-4).